The sequence spans 97 residues: Aspartyl/glutamyl-tRNA(Asn/Gln) amidotransferase subunit C (97 aa).

Belongs to the GatC family. As to quaternary structure, heterotrimer of A, B and C subunits.

It catalyses the reaction L-glutamyl-tRNA(Gln) + L-glutamine + ATP + H2O = L-glutaminyl-tRNA(Gln) + L-glutamate + ADP + phosphate + H(+). The catalysed reaction is L-aspartyl-tRNA(Asn) + L-glutamine + ATP + H2O = L-asparaginyl-tRNA(Asn) + L-glutamate + ADP + phosphate + 2 H(+). Its function is as follows. Allows the formation of correctly charged Asn-tRNA(Asn) or Gln-tRNA(Gln) through the transamidation of misacylated Asp-tRNA(Asn) or Glu-tRNA(Gln) in organisms which lack either or both of asparaginyl-tRNA or glutaminyl-tRNA synthetases. The reaction takes place in the presence of glutamine and ATP through an activated phospho-Asp-tRNA(Asn) or phospho-Glu-tRNA(Gln). In Anaeromyxobacter sp. (strain K), this protein is Aspartyl/glutamyl-tRNA(Asn/Gln) amidotransferase subunit C.